Here is a 233-residue protein sequence, read N- to C-terminus: uncharacterized protein (233 aa).

Residues N58, N77, N93, N102, N110, N120, and N155 are each glycosylated (N-linked (GlcNAc...) asparagine; by host). Residues 102 to 124 (NSSTTTTTNASSSDSSMYNTTRS) show a composition bias toward low complexity. Residues 102-132 (NSSTTTTTNASSSDSSMYNTTRSTQRRVTYD) form a disordered region. A helical membrane pass occupies residues 168–188 (FSLLQWVLVAALAFFMYYFLW).

This sequence belongs to the ascovirus HvAv ORF58 family.

Its subcellular location is the membrane. This is an uncharacterized protein from Trichoplusia ni ascovirus 2c (TnAV-2c).